A 32-amino-acid chain; its full sequence is C-reactive protein (32 aa).

The Pentraxin (PTX) domain maps to 2–32 (VIKTLVFQSESNNSFVELIPMKPLNLRAFXL).

This sequence belongs to the pentraxin family. As to quaternary structure, homopentamer. Pentraxin (or pentaxin) have a discoid arrangement of 5 non-covalently bound subunits. Glycosylated.

The protein localises to the secreted. Displays several functions associated with host defense: it promotes agglutination, bacterial capsular swelling, phagocytosis, and complement fixation through its calcium-dependent binding to phosphorylcholine. This chain is C-reactive protein, found in Pleuronectes platessa (European plaice).